Here is a 365-residue protein sequence, read N- to C-terminus: Prostaglandin E2 receptor EP3 subtype (365 aa).

Residues 1–30 (MAGVWAPEHSVEAHSNQSSAADGCGSVSVA) are Extracellular-facing. An N-linked (GlcNAc...) asparagine glycan is attached at Asn16. A helical membrane pass occupies residues 31–55 (FPITMMVTGFVGNALAMLLVVRSYR). The Cytoplasmic segment spans residues 56-68 (RRESKRKKSFLLC). A helical membrane pass occupies residues 69–89 (IGWLALTDLVGQLLTSPVVIL). Topologically, residues 90-108 (VYLSQRRWEQLDPSGRLCT) are extracellular. Cysteines 107 and 184 form a disulfide. Residues 109-130 (FFGLTMTVFGLSSLLVASAMAV) form a helical membrane-spanning segment. At 131-151 (ERALAIRAPHWYASHMKTRAT) the chain is on the cytoplasmic side. Residues 152 to 173 (PVLLGVWLSVLAFALLPVLGVG) traverse the membrane as a helical segment. Topologically, residues 174–203 (RYSVQWPGTWCFISTGPAGNETDSAREPGS) are extracellular. Asn193 carries N-linked (GlcNAc...) asparagine glycosylation. The helical transmembrane segment at 204 to 229 (VAFASAFACLGLLALVVTFACNLATI) threads the bilayer. The Cytoplasmic segment spans residues 230-259 (KALVSRCRAKAAASQSSAQWGRITTETAIQ). A helical transmembrane segment spans residues 260 to 283 (LMGIMCVLSVCWSPLLIMMLKMIF). The Extracellular portion of the chain corresponds to 284–303 (NQMSVEQCKTQMGKEKECNS). The chain crosses the membrane as a helical span at residues 304 to 325 (FLIAVRLASLNQILDPWVYLLL). Topologically, residues 326-365 (RKILLRKFCQIRDHTNYASSSTSLPCPGSSVLMWSDQLER) are cytoplasmic.

This sequence belongs to the G-protein coupled receptor 1 family. Interacts (via C-terminus) with MKLN1. In terms of assembly, does not interact with MKLN1. In terms of tissue distribution, principally expressed in the tubules of the renal medulla. Specific expression is seen in medullary and cortical thick ascending limbs; lower levels are detected in cortical and inner medullary collecting ducts. Not detected significantly in the glomeruli. In the brain, expressed in all types of glial cells.

Its subcellular location is the cell membrane. In terms of biological role, receptor for prostaglandin E2 (PGE2). Required for normal development of fever in response to pyrinogens, including IL1B, prostaglandin E2 and bacterial lipopolysaccharide (LPS). Required for normal potentiation of platelet aggregation by prostaglandin E2, and thus plays a role in the regulation of blood coagulation. Required for increased HCO3(-) secretion in the duodenum in response to mucosal acidification, and thereby contributes to the protection of the mucosa against acid-induced ulceration. Not required for normal kidney function, normal urine volume and osmolality. Receptor for prostaglandin E2 (PGE2); ligand binding activates a signaling cascade via G(i) proteins that leads to the inhibition of adenylate cyclase. Its function is as follows. Receptor for prostaglandin E2 (PGE2); ligand binding can activate several distinct signaling cascades, resulting in activation or inhibition of adenylate cyclase. The polypeptide is Prostaglandin E2 receptor EP3 subtype (Ptger3) (Rattus norvegicus (Rat)).